A 401-amino-acid polypeptide reads, in one-letter code: Phosphoglycerate kinase (401 aa).

Residues 26–28 (DLN), arginine 41, 64–67 (HLGR), arginine 123, and arginine 156 each bind substrate. ATP is bound by residues lysine 207, glycine 298, glutamate 329, and 355–358 (GGDS).

This sequence belongs to the phosphoglycerate kinase family. Monomer.

It localises to the cytoplasm. It carries out the reaction (2R)-3-phosphoglycerate + ATP = (2R)-3-phospho-glyceroyl phosphate + ADP. It functions in the pathway carbohydrate degradation; glycolysis; pyruvate from D-glyceraldehyde 3-phosphate: step 2/5. The protein is Phosphoglycerate kinase of Bdellovibrio bacteriovorus (strain ATCC 15356 / DSM 50701 / NCIMB 9529 / HD100).